We begin with the raw amino-acid sequence, 83 residues long: Disintegrin isoform D-2 (83 aa).

The region spanning 2–83 is the Disintegrin domain; it reads PPVCGNELLE…GKSSDCPWNH (82 aa). Disulfide bonds link Cys-5/Cys-24, Cys-16/Cys-34, Cys-18/Cys-29, Cys-28/Cys-51, Cys-42/Cys-48, Cys-47/Cys-72, and Cys-60/Cys-79. The Cell attachment site signature appears at 64–66; sequence RGD.

It belongs to the venom metalloproteinase (M12B) family. P-II subfamily. P-IIa sub-subfamily. Monomer (disintegrin). As to expression, expressed by the venom gland.

The protein localises to the secreted. Inhibits fibrinogen interaction with platelets. Acts by binding to the alpha-IIb/beta-3 (ITGA2B/ITGB3) on the platelet surface and inhibits aggregation induced by ADP, thrombin, platelet-activating factor and collagen. This chain is Disintegrin isoform D-2, found in Bitis arietans (African puff adder).